Reading from the N-terminus, the 378-residue chain is Ribosomal RNA large subunit methyltransferase G (378 aa).

This sequence belongs to the methyltransferase superfamily. RlmG family.

It is found in the cytoplasm. It carries out the reaction guanosine(1835) in 23S rRNA + S-adenosyl-L-methionine = N(2)-methylguanosine(1835) in 23S rRNA + S-adenosyl-L-homocysteine + H(+). Functionally, specifically methylates the guanine in position 1835 (m2G1835) of 23S rRNA. This Escherichia coli O139:H28 (strain E24377A / ETEC) protein is Ribosomal RNA large subunit methyltransferase G.